The following is a 124-amino-acid chain: Fluoride-specific ion channel FluC 1 (124 aa).

Transmembrane regions (helical) follow at residues 1 to 21, 30 to 50, 56 to 76, and 102 to 122; these read MNWL…YVTD, AVFP…LGLL, AGVA…GALT, and IASV…AQAL. The Na(+) site is built by Gly73 and Thr76.

The protein belongs to the fluoride channel Fluc/FEX (TC 1.A.43) family.

It is found in the cell membrane. It carries out the reaction fluoride(in) = fluoride(out). Na(+) is not transported, but it plays an essential structural role and its presence is essential for fluoride channel function. Its function is as follows. Fluoride-specific ion channel. Important for reducing fluoride concentration in the cell, thus reducing its toxicity. The protein is Fluoride-specific ion channel FluC 1 of Streptomyces avermitilis (strain ATCC 31267 / DSM 46492 / JCM 5070 / NBRC 14893 / NCIMB 12804 / NRRL 8165 / MA-4680).